We begin with the raw amino-acid sequence, 235 residues long: Tetraspanin-8 (235 aa).

The Cytoplasmic segment spans residues 1–12; sequence MAGVSSCLKYSM. The helical transmembrane segment at 13–33 threads the bilayer; it reads FFFNFLFWVCGTLILGLAIWV. Over 34 to 52 the chain is Extracellular; it reads RVSKDGKEIITSGDSSTNP. Residues 53 to 73 traverse the membrane as a helical segment; sequence FIAVNILIAVGSIIMVLGFLG. At 74-84 the chain is on the cytoplasmic side; it reads CCGAVKESRCM. The helical transmembrane segment at 85–105 threads the bilayer; it reads LLLFFIGLLLILILQVAAGIL. Over 106–203 the chain is Extracellular; the sequence is GAAFKPEYNR…SLIKDLFEKN (98 aa). N118 is a glycosylation site (N-linked (GlcNAc...) asparagine). Residues 204-224 traverse the membrane as a helical segment; sequence IIIVIGIAFGLAVIEILGLVF. Residues 225 to 235 lie on the Cytoplasmic side of the membrane; the sequence is SMVLYCQIGSK.

It belongs to the tetraspanin (TM4SF) family. In terms of assembly, forms homooligomers. Interacts with MEP1B. Interacts with integrin alpha3/ITGA3. Interacts with RICTOR and MTOR. Interacts with ADAM17. Interacts with ECE1.

The protein localises to the cell membrane. Structural component of specialized membrane microdomains known as tetraspanin-enriched microdomains (TERMs), which act as platforms for receptor clustering and signaling. Participates thereby in diverse biological functions such as cell signal transduction, migration and protein trafficking. Promotes ADAM17-mediated TNF-alpha processing through recruitment of ADAM17 to tetraspanin-enriched micro-domains (TEMs). Forms a complex with RICTOR and integrin alpha3/ITGA3 to mediate mTORC2 activation and AKT1 phosphorylation leading to cell migration. Reduces apoptosis and autophagy induced by high glucose levels through forming a complex with mTOR and RICTOR. Contributes to the maintenance of intestinal epithelial barrier and plays a role in the regulation of intestine inflammation by switching interferon gamma receptor 1/IFNGR1 from clathrin-dependent to lipid raft-dependent endocytosis route to limit STAT1 activation magnitude and duration. Acts as a modulator of the endothelin axis by associating with endothelin converting enzyme ECE1 and regulating its activity of conversion of the endothelin-1 precursor to endothelin. This Mus musculus (Mouse) protein is Tetraspanin-8 (Tspan8).